The sequence spans 388 residues: Na(+)/H(+) antiporter NhaA (388 aa).

The next 12 helical transmembrane spans lie at 13–33, 36–56, 59–79, 95–115, 125–145, 154–174, 179–199, 213–233, 259–279, 287–307, 328–348, and 363–383; these read AAGG…ANTP, GIYH…LEIA, LLLW…GLEV, VFPA…YLMF, GWAI…ALLG, VFLL…IALF, VSMA…FMNW, LVLW…GVII, VAFL…LQGV, LLPV…IFTF, VFAV…IASL, and LGIL…LRMS.

It belongs to the NhaA Na(+)/H(+) (TC 2.A.33) antiporter family.

It is found in the cell inner membrane. The enzyme catalyses Na(+)(in) + 2 H(+)(out) = Na(+)(out) + 2 H(+)(in). Na(+)/H(+) antiporter that extrudes sodium in exchange for external protons. The chain is Na(+)/H(+) antiporter NhaA from Serratia proteamaculans (strain 568).